The sequence spans 295 residues: Phosphatidylglycerol--prolipoprotein diacylglyceryl transferase (295 aa).

The next 4 helical transmembrane spans lie at 28-48 (WYAL…VLAT), 69-89 (LLTW…VLFY), 101-121 (ILMV…VVIA), and 131-151 (IPKL…LLLG). Position 152 (Arg-152) interacts with a 1,2-diacyl-sn-glycero-3-phospho-(1'-sn-glycerol). A run of 3 helical transmembrane segments spans residues 195 to 215 (QLYE…WLVW), 224 to 244 (GLIT…VEFF), and 268 to 288 (GLTM…WFVL).

It belongs to the Lgt family.

Its subcellular location is the cell inner membrane. The catalysed reaction is L-cysteinyl-[prolipoprotein] + a 1,2-diacyl-sn-glycero-3-phospho-(1'-sn-glycerol) = an S-1,2-diacyl-sn-glyceryl-L-cysteinyl-[prolipoprotein] + sn-glycerol 1-phosphate + H(+). The protein operates within protein modification; lipoprotein biosynthesis (diacylglyceryl transfer). Catalyzes the transfer of the diacylglyceryl group from phosphatidylglycerol to the sulfhydryl group of the N-terminal cysteine of a prolipoprotein, the first step in the formation of mature lipoproteins. In Ruegeria pomeroyi (strain ATCC 700808 / DSM 15171 / DSS-3) (Silicibacter pomeroyi), this protein is Phosphatidylglycerol--prolipoprotein diacylglyceryl transferase.